Consider the following 78-residue polypeptide: Large ribosomal subunit protein bL28 (78 aa).

Belongs to the bacterial ribosomal protein bL28 family.

The protein is Large ribosomal subunit protein bL28 of Thioalkalivibrio sulfidiphilus (strain HL-EbGR7).